The following is a 350-amino-acid chain: Biotin synthase (350 aa).

Positions 41 to 265 (NEVQISRLLS…VMPLSRVRLS (225 aa)) constitute a Radical SAM core domain. Residues C56, C60, and C63 each contribute to the [4Fe-4S] cluster site. [2Fe-2S] cluster is bound by residues C100, C131, C191, and R263.

The protein belongs to the radical SAM superfamily. Biotin synthase family. As to quaternary structure, homodimer. [4Fe-4S] cluster serves as cofactor. Requires [2Fe-2S] cluster as cofactor.

The catalysed reaction is (4R,5S)-dethiobiotin + (sulfur carrier)-SH + 2 reduced [2Fe-2S]-[ferredoxin] + 2 S-adenosyl-L-methionine = (sulfur carrier)-H + biotin + 2 5'-deoxyadenosine + 2 L-methionine + 2 oxidized [2Fe-2S]-[ferredoxin]. The protein operates within cofactor biosynthesis; biotin biosynthesis; biotin from 7,8-diaminononanoate: step 2/2. In terms of biological role, catalyzes the conversion of dethiobiotin (DTB) to biotin by the insertion of a sulfur atom into dethiobiotin via a radical-based mechanism. This is Biotin synthase from Shewanella loihica (strain ATCC BAA-1088 / PV-4).